The following is an 89-amino-acid chain: Probable Fe(2+)-trafficking protein (89 aa).

This sequence belongs to the Fe(2+)-trafficking protein family.

Could be a mediator in iron transactions between iron acquisition and iron-requiring processes, such as synthesis and/or repair of Fe-S clusters in biosynthetic enzymes. The polypeptide is Probable Fe(2+)-trafficking protein (Legionella pneumophila (strain Lens)).